Consider the following 114-residue polypeptide: Large ribosomal subunit protein uL22 (114 aa).

It belongs to the universal ribosomal protein uL22 family. Part of the 50S ribosomal subunit.

This protein binds specifically to 23S rRNA; its binding is stimulated by other ribosomal proteins, e.g. L4, L17, and L20. It is important during the early stages of 50S assembly. It makes multiple contacts with different domains of the 23S rRNA in the assembled 50S subunit and ribosome. Its function is as follows. The globular domain of the protein is located near the polypeptide exit tunnel on the outside of the subunit, while an extended beta-hairpin is found that lines the wall of the exit tunnel in the center of the 70S ribosome. The sequence is that of Large ribosomal subunit protein uL22 from Streptococcus suis (strain 98HAH33).